We begin with the raw amino-acid sequence, 96 residues long: uncharacterized protein (96 aa).

This is an uncharacterized protein from Homo sapiens (Human).